We begin with the raw amino-acid sequence, 139 residues long: D-ribose pyranase (139 aa).

Residue His20 is the Proton donor of the active site. Residues Asp28, His106, and 128-130 (YAN) each bind substrate.

Belongs to the RbsD / FucU family. RbsD subfamily. As to quaternary structure, homodecamer.

Its subcellular location is the cytoplasm. The catalysed reaction is beta-D-ribopyranose = beta-D-ribofuranose. Its pathway is carbohydrate metabolism; D-ribose degradation; D-ribose 5-phosphate from beta-D-ribopyranose: step 1/2. In terms of biological role, catalyzes the interconversion of beta-pyran and beta-furan forms of D-ribose. The sequence is that of D-ribose pyranase from Aliivibrio salmonicida (strain LFI1238) (Vibrio salmonicida (strain LFI1238)).